A 419-amino-acid polypeptide reads, in one-letter code: MFGRGPSRKSDNTKFYEILGVPKTAAPEDLKKAYKKAAIKNHPDKGGDPEKFKELAQAYEVLSDPEKREIYDQYGEDALKEGMGGGGGGHDPFDIFSSFFGSGGHPFGSHSRGRRQRRGEDVVHPLKVSLEDVYLGTTKKLSLSRKALCSKCNGKGSKSGASMKCGGCQGSGMKISIRQFGPGMMQQVQHACNDCKGTGETINDRDRCPQCKGEKVVSEKKVLEVNVEKGMQHNQKITFSGQADEAPDTVTGDIVFVIQQKEHPKFKRKGEDLFVEHTISLTEALCGFQFVLTHLDKRQLLIKSKPGEVVKPDSYKAISDEGMPIYQRPFMKGKLYIHFTVEFPESLSPDQTKAIEAVLPKPTKAAISDMEIDDCEETTLHDVNIEDEMKRKAQAQREAYDDDEEDHPGGAQRVQCAQQ.

In terms of domain architecture, J spans 14–75; the sequence is KFYEILGVPK…EKREIYDQYG (62 aa). The segment at 136-220 adopts a CR-type zinc-finger fold; the sequence is GTTKKLSLSR…CKGEKVVSEK (85 aa). Zn(2+)-binding residues include C149, C152, C165, C168, C192, C195, C208, and C211. CXXCXGXG motif repeat units lie at residues 149–156, 165–172, 192–199, and 208–215; these read CSKCNGKG, CGGCQGSG, CNDCKGTG, and CPQCKGEK. Residues 378 to 391 are compositionally biased toward basic and acidic residues; it reads TTLHDVNIEDEMKR. A disordered region spans residues 378–419; it reads TTLHDVNIEDEMKRKAQAQREAYDDDEEDHPGGAQRVQCAQQ. The residue at position 416 (C416) is a Cysteine methyl ester. Residue C416 is the site of S-farnesyl cysteine attachment. Positions 417 to 419 are cleaved as a propeptide — removed in mature form; the sequence is AQQ.

Belongs to the DnaJ family. A/I subfamily. As to quaternary structure, homodimer. It depends on Zn(2+) as a cofactor. Farnesylated. In terms of tissue distribution, expressed in both etiolated and light-grown tissues.

It localises to the membrane. In terms of biological role, plays a continuous role in plant development probably in the structural organization of compartments. The chain is Chaperone protein dnaJ 2 (ATJ2) from Arabidopsis thaliana (Mouse-ear cress).